We begin with the raw amino-acid sequence, 161 residues long: Photosystem I reaction center subunit XI (161 aa).

The next 2 helical transmembrane spans lie at 84 to 104 and 126 to 146; these read LIST…YGLV and FTGG…FLLE.

This sequence belongs to the PsaL family.

It is found in the cellular thylakoid membrane. This Trichodesmium erythraeum (strain IMS101) protein is Photosystem I reaction center subunit XI.